The following is a 400-amino-acid chain: MDSSAVPANASNCTDPLAPSTCSPAPGPGSWVNLSHLDGNLSDPCGPNRTDLGGSDSPCPPTGSPSMITAITIMALYSIVCVVGLFGNFLVMYVIVRYTKMKTATNIYIFNLALADALATSTLPFQSVNYLMGTWPFGTILCKIVISIDYYNMFTSIFTLCTMSVDRYIAVCHPVKALDFRTPRNAKIVNVCNWIISSAIGLPVMFMATTKYRQGSIDCTLTFSHPTWYWENLLKICVFIFAFIMPVLIITVCYGLMILRLKSVRMLSGSKEKDRNLRRITRMVLVVVAVFIVCWTPIHIYVIIKALVTIPETTFQTVSWHFCIALGYTNSCLNPVLYAFLDENFKRCFREFCIPTPSAIEQQNSARIRQNTRDHPSTANTVDRTNHQLENLEAETAPLP.

The Extracellular portion of the chain corresponds to 1–68 (MDSSAVPANA…CPPTGSPSMI (68 aa)). Residues N9, N12, N33, N40, and N48 are each glycosylated (N-linked (GlcNAc...) asparagine). Residues 69 to 93 (TAITIMALYSIVCVVGLFGNFLVMY) form a helical membrane-spanning segment. Topologically, residues 94 to 106 (VIVRYTKMKTATN) are cytoplasmic. The chain crosses the membrane as a helical span at residues 107–131 (IYIFNLALADALATSTLPFQSVNYL). At 132–142 (MGTWPFGTILC) the chain is on the extracellular side. C142 and C219 form a disulfide bridge. Residues 143–165 (KIVISIDYYNMFTSIFTLCTMSV) form a helical membrane-spanning segment. Residues 166–185 (DRYIAVCHPVKALDFRTPRN) are Cytoplasmic-facing. Y168 carries the post-translational modification Phosphotyrosine. A helical membrane pass occupies residues 186–207 (AKIVNVCNWIISSAIGLPVMFM). Residues 208 to 230 (ATTKYRQGSIDCTLTFSHPTWYW) lie on the Extracellular side of the membrane. A helical transmembrane segment spans residues 231–255 (ENLLKICVFIFAFIMPVLIITVCYG). The Cytoplasmic portion of the chain corresponds to 256–279 (LMILRLKSVRMLSGSKEKDRNLRR). Residues 280–306 (ITRMVLVVVAVFIVCWTPIHIYVIIKA) form a helical membrane-spanning segment. The Extracellular segment spans residues 307–314 (LVTIPETT). A helical membrane pass occupies residues 315-338 (FQTVSWHFCIALGYTNSCLNPVLY). Residues 334–338 (NPVLY) carry the NPxxY; plays a role in stabilizing the activated conformation of the receptor motif. Topologically, residues 339–400 (AFLDENFKRC…NLEAETAPLP (62 aa)) are cytoplasmic. C353 carries the S-palmitoyl cysteine lipid modification. The residue at position 365 (S365) is a Phosphoserine. T372 carries the post-translational modification Phosphothreonine. S377 is subject to Phosphoserine. T396 carries the phosphothreonine modification.

This sequence belongs to the G-protein coupled receptor 1 family. Forms homooligomers and heterooligomers with other GPCRs, such as OPRD1, OPRK1, OPRL1, NPFFR2, ADRA2A, SSTR2, CNR1 and CCR5 (probably in dimeric forms). Interacts with heterotrimeric G proteins; interaction with a heterotrimeric complex containing GNAI1, GNB1 and GNG2 stabilizes the active conformation of the receptor and increases its affinity for endomorphin-2, the synthetic opioid peptide DAMGO and for morphinan agonists. Interacts with PPL; the interaction disrupts agonist-mediated G-protein activation. Interacts (via C-terminus) with DNAJB4 (via C-terminus). Interacts with calmodulin; the interaction inhibits the constitutive activity of OPRM1; it abolishes basal and attenuates agonist-stimulated G-protein coupling. Interacts with FLNA, PLD2, RANBP9 and WLS and GPM6A. Interacts with RTP4. Interacts with SYP and GNAS. Interacts with RGS9, RGS17, RGS20, RGS4, PPP1R9B and HINT1. Phosphorylated. Differentially phosphorylated in basal and agonist-induced conditions. Agonist-mediated phosphorylation modulates receptor internalization. Phosphorylated by GRK2 in a agonist-dependent manner. Phosphorylation at Tyr-168 requires receptor activation, is dependent on non-receptor protein tyrosine kinase Src and results in a decrease in agonist efficacy by reducing G-protein coupling efficiency. Phosphorylated on tyrosine residues; the phosphorylation is involved in agonist-induced G-protein-independent receptor down-regulation. Phosphorylation at Ser-377 is involved in G-protein-dependent but not beta-arrestin-dependent activation of the ERK pathway. In terms of processing, ubiquitinated. A basal ubiquitination seems not to be related to degradation. Ubiquitination is increased upon formation of OPRM1:OPRD1 oligomers leading to proteasomal degradation; the ubiquitination is diminished by RTP4.

The protein localises to the cell membrane. The protein resides in the cell projection. It localises to the axon. It is found in the perikaryon. Its subcellular location is the dendrite. The protein localises to the endosome. Functionally, receptor for endogenous opioids such as beta-endorphin and endomorphin. Receptor for natural and synthetic opioids including morphine, heroin, DAMGO, fentanyl, etorphine, buprenorphin and methadone. Also activated by enkephalin peptides, such as Met-enkephalin or Met-enkephalin-Arg-Phe, with higher affinity for Met-enkephalin-Arg-Phe. Agonist binding to the receptor induces coupling to an inactive GDP-bound heterotrimeric G-protein complex and subsequent exchange of GDP for GTP in the G-protein alpha subunit leading to dissociation of the G-protein complex with the free GTP-bound G-protein alpha and the G-protein beta-gamma dimer activating downstream cellular effectors. The agonist- and cell type-specific activity is predominantly coupled to pertussis toxin-sensitive G(i) and G(o) G alpha proteins, GNAI1, GNAI2, GNAI3 and GNAO1, and to a lesser extent to pertussis toxin-insensitive G alpha proteins GNAZ and GNA15. They mediate an array of downstream cellular responses, including inhibition of adenylate cyclase activity and both N-type and L-type calcium channels, activation of inward rectifying potassium channels, mitogen-activated protein kinase (MAPK), phospholipase C (PLC), phosphoinositide/protein kinase (PKC), phosphoinositide 3-kinase (PI3K) and regulation of NF-kappa-B. Also couples to adenylate cyclase stimulatory G alpha proteins. The selective temporal coupling to G-proteins and subsequent signaling can be regulated by RGSZ proteins, such as RGS9, RGS17 and RGS4. Phosphorylation by members of the GPRK subfamily of Ser/Thr protein kinases and association with beta-arrestins is involved in short-term receptor desensitization. Beta-arrestins associate with the GPRK-phosphorylated receptor and uncouple it from the G-protein thus terminating signal transduction. The phosphorylated receptor is internalized through endocytosis via clathrin-coated pits which involves beta-arrestins. The activation of the ERK pathway occurs either in a G-protein-dependent or a beta-arrestin-dependent manner and is regulated by agonist-specific receptor phosphorylation. Acts as a class A G-protein coupled receptor (GPCR) which dissociates from beta-arrestin at or near the plasma membrane and undergoes rapid recycling. Receptor down-regulation pathways are varying with the agonist and occur dependent or independent of G-protein coupling. Endogenous ligands induce rapid desensitization, endocytosis and recycling. Heterooligomerization with other GPCRs can modulate agonist binding, signaling and trafficking properties. Involved in neurogenesis. In Saimiri boliviensis boliviensis (Bolivian squirrel monkey), this protein is Mu-type opioid receptor (OPRM1).